Reading from the N-terminus, the 180-residue chain is MSNKYSLNDDELQLFRTSITGTKKLRQDTYTHKPLRRKIGELPAKRALQEQVDASFYFSDEFQPQLDAEGPTRYVRPGASHYELKKLRRGDYSPELFLDLHGLTQLQAKQELGALLAACRREHVYCACVMHGHGKHILKQQTPLWLAQHPDVLAFHQAPKEFGGNAALLVLVALEAPSLE.

One can recognise a Smr domain in the interval 98-173 (LDLHGLTQLQ…GNAALLVLVA (76 aa)).

The protein belongs to the SmrB family. Associates with collided ribosomes, but not with correctly translating polysomes.

In terms of biological role, acts as a ribosome collision sensor. Detects stalled/collided disomes (pairs of ribosomes where the leading ribosome is stalled and a second ribosome has collided with it) and endonucleolytically cleaves mRNA at the 5' boundary of the stalled ribosome. Stalled/collided disomes form a new interface (primarily via the 30S subunits) that binds SmrB. Cleaved mRNA becomes available for tmRNA ligation, leading to ribosomal subunit dissociation and rescue of stalled ribosomes. The chain is Ribosome rescue factor SmrB from Pectobacterium carotovorum subsp. carotovorum (strain PC1).